Reading from the N-terminus, the 342-residue chain is tRNA dimethylallyltransferase (342 aa).

The disordered stretch occupies residues 1–30; sequence MSANGPAAEPADGGRAVPAGGGEAVPAGGG. The segment covering 19-30 has biased composition (gly residues); the sequence is AGGGEAVPAGGG. 49-56 contributes to the ATP binding site; sequence GPTAAGKS. 51–56 is a binding site for substrate; it reads TAAGKS. The interval 74 to 77 is interaction with substrate tRNA; that stretch reads DSMQ.

Belongs to the IPP transferase family. As to quaternary structure, monomer. It depends on Mg(2+) as a cofactor.

The enzyme catalyses adenosine(37) in tRNA + dimethylallyl diphosphate = N(6)-dimethylallyladenosine(37) in tRNA + diphosphate. Functionally, catalyzes the transfer of a dimethylallyl group onto the adenine at position 37 in tRNAs that read codons beginning with uridine, leading to the formation of N6-(dimethylallyl)adenosine (i(6)A). This chain is tRNA dimethylallyltransferase, found in Salinispora arenicola (strain CNS-205).